The sequence spans 65 residues: Weak toxin CM-11 (65 aa).

Intrachain disulfides connect Cys3-Cys24, Cys6-Cys11, Cys17-Cys42, Cys46-Cys57, and Cys58-Cys63.

This sequence belongs to the three-finger toxin family. Ancestral subfamily. Orphan group II sub-subfamily. Expressed by the venom gland.

It localises to the secreted. In terms of biological role, binds with low affinity to muscular (alpha-1-beta-1-delta-epsilon/CHRNA1-CHRNB1-CHRND-CHRNE) and very low affinity to neuronal (alpha-7/CHRNA7) nicotinic acetylcholine receptor (nAChR). The chain is Weak toxin CM-11 from Naja haje haje (Egyptian cobra).